A 309-amino-acid chain; its full sequence is Transaldolase (309 aa).

Lysine 125 acts as the Schiff-base intermediate with substrate in catalysis.

Belongs to the transaldolase family. Type 1 subfamily. As to quaternary structure, homodimer.

The protein localises to the cytoplasm. It catalyses the reaction D-sedoheptulose 7-phosphate + D-glyceraldehyde 3-phosphate = D-erythrose 4-phosphate + beta-D-fructose 6-phosphate. It participates in carbohydrate degradation; pentose phosphate pathway; D-glyceraldehyde 3-phosphate and beta-D-fructose 6-phosphate from D-ribose 5-phosphate and D-xylulose 5-phosphate (non-oxidative stage): step 2/3. Its function is as follows. Transaldolase is important for the balance of metabolites in the pentose-phosphate pathway. In Pseudomonas syringae pv. tomato (strain ATCC BAA-871 / DC3000), this protein is Transaldolase.